Reading from the N-terminus, the 532-residue chain is Apolipoprotein N-acyltransferase (532 aa).

6 helical membrane-spanning segments follow: residues 37–57, 75–95, 106–126, 128–148, 179–199, and 207–227; these read IFVAGFVSFPVLVWLIDGAIA, WWFGFGYFVSGLWWIGTALLV, LAVLGLPAFLALFYAFAAMIA, LLWSDGLGRILAFAFGFALAE, VIGLVGMSALAVFVFAAPALL, and TGIGLAIFLALAHVGFGAWTL. In terms of domain architecture, CN hydrolase spans 245-494; that stretch reads VQPSIAQAMK…VGVVDSYLPS (250 aa). Residue Glu-289 is the Proton acceptor of the active site. The active site involves Lys-353. Catalysis depends on Cys-406, which acts as the Nucleophile. A helical transmembrane segment spans residues 505–525; it reads GWIQTVLILLTLLAASVGLIL.

It belongs to the CN hydrolase family. Apolipoprotein N-acyltransferase subfamily.

The protein resides in the cell inner membrane. The enzyme catalyses N-terminal S-1,2-diacyl-sn-glyceryl-L-cysteinyl-[lipoprotein] + a glycerophospholipid = N-acyl-S-1,2-diacyl-sn-glyceryl-L-cysteinyl-[lipoprotein] + a 2-acyl-sn-glycero-3-phospholipid + H(+). It participates in protein modification; lipoprotein biosynthesis (N-acyl transfer). Its function is as follows. Catalyzes the phospholipid dependent N-acylation of the N-terminal cysteine of apolipoprotein, the last step in lipoprotein maturation. The protein is Apolipoprotein N-acyltransferase of Brucella melitensis biotype 1 (strain ATCC 23456 / CCUG 17765 / NCTC 10094 / 16M).